Reading from the N-terminus, the 257-residue chain is Distal membrane-arm assembly complex protein 2 (257 aa).

The residue at position 253 (Ser-253) is a Phosphoserine.

It belongs to the ATP synthase subunit s family. As to quaternary structure, interacts with incompletely assembled mitochondrial NADH:ubiquinone oxidoreductase complex (complex I).

The protein localises to the mitochondrion. Functionally, required for the assembly of the mitochondrial NADH:ubiquinone oxidoreductase complex (complex I). Involved in the assembly of the distal region of complex I. This chain is Distal membrane-arm assembly complex protein 2, found in Homo sapiens (Human).